The primary structure comprises 586 residues: Isocitrate dehydrogenase kinase/phosphatase (586 aa).

ATP is bound by residues 316–322 (ARGDRGL) and Lys337. Asp372 is an active-site residue.

Belongs to the AceK family.

Its subcellular location is the cytoplasm. It catalyses the reaction L-seryl-[isocitrate dehydrogenase] + ATP = O-phospho-L-seryl-[isocitrate dehydrogenase] + ADP + H(+). Functionally, bifunctional enzyme which can phosphorylate or dephosphorylate isocitrate dehydrogenase (IDH) on a specific serine residue. This is a regulatory mechanism which enables bacteria to bypass the Krebs cycle via the glyoxylate shunt in response to the source of carbon. When bacteria are grown on glucose, IDH is fully active and unphosphorylated, but when grown on acetate or ethanol, the activity of IDH declines drastically concomitant with its phosphorylation. This chain is Isocitrate dehydrogenase kinase/phosphatase, found in Anaeromyxobacter dehalogenans (strain 2CP-C).